Reading from the N-terminus, the 248-residue chain is tRNA (guanine-N(7)-)-methyltransferase (248 aa).

The S-adenosyl-L-methionine site is built by Glu80, Glu105, Asp132, and Asp155. Residue Asp155 is part of the active site. Residues Lys159, Asp191, and 223–226 (TKFE) contribute to the substrate site.

This sequence belongs to the class I-like SAM-binding methyltransferase superfamily. TrmB family.

The catalysed reaction is guanosine(46) in tRNA + S-adenosyl-L-methionine = N(7)-methylguanosine(46) in tRNA + S-adenosyl-L-homocysteine. It participates in tRNA modification; N(7)-methylguanine-tRNA biosynthesis. In terms of biological role, catalyzes the formation of N(7)-methylguanine at position 46 (m7G46) in tRNA. The chain is tRNA (guanine-N(7)-)-methyltransferase from Nocardioides sp. (strain ATCC BAA-499 / JS614).